The following is a 257-amino-acid chain: Glutamate racemase (257 aa).

Substrate contacts are provided by residues 12–13 (DS) and 44–45 (YG). The active-site Proton donor/acceptor is the Cys75. 76-77 (NT) serves as a coordination point for substrate. Cys185 acts as the Proton donor/acceptor in catalysis. A substrate-binding site is contributed by 186–187 (TH).

This sequence belongs to the aspartate/glutamate racemases family.

It carries out the reaction L-glutamate = D-glutamate. It participates in cell wall biogenesis; peptidoglycan biosynthesis. Functionally, provides the (R)-glutamate required for cell wall biosynthesis. In Clostridium botulinum (strain Langeland / NCTC 10281 / Type F), this protein is Glutamate racemase.